Here is a 568-residue protein sequence, read N- to C-terminus: MNTEILGVAVQIVLMVVLAYPLGRYIARVYKGEKTWSDFMAPIERVIYKICGINPQEEMNWKQFLKALLILNAFWFVWGMVLLVSQGWLPLNPDGNGAQTPDQAFNTCISFMVNCNLQHYSGESGLTYFTQLFVIMLFQFITAATGMAAMAGVMKSMAAKSTQTIGNFWHFLVISCTRILLPLSLVVGFILILQGTPMGFDGRMQLTTLEGQEQMVSQGPTAAIVPIKQLGTNGGGYFGVNSSHPLENPTYLTNMVECWSILIIPMAMVLALGFYTNRRKLGYSIFGVMLFAYLAGVFINVGQEMGGNPRISEMGIAQDHGAMEGKEVRLGAGATALWSVTTTVTSNGSVNGMHDSTMPLSGMVEMLNMQINTWFGGVGVGWLNYYTFIIMAVFISGLMVGRTPEFLGKKVEAREMKIATFVALLHPFVILVFTAISSYVYTHHPDFVESEGGWLNNLGFHGLSEQLYEYTSSAANNGSGFEGLGDNTYFWNWTCGIVLILSRFIPIVGQVAIAGLLAQKKFIPESAGTLKTDTVTFAVMTFAVIFIVAALSFFPVHALSTIAEHLSL.

10 helical membrane passes run 3-23, 64-84, 133-153, 179-199, 255-275, 281-301, 375-395, 418-438, 497-517, and 535-555; these read TEILGVAVQIVLMVVLAYPLG, FLKALLILNAFWFVWGMVLLV, FVIMLFQFITAATGMAAMAGV, ILLPLSLVVGFILILQGTPMG, MVECWSILIIPMAMVLALGFY, LGYSIFGVMLFAYLAGVFINV, FGGVGVGWLNYYTFIIMAVFI, IATFVALLHPFVILVFTAISS, IVLILSRFIPIVGQVAIAGLL, and VTFAVMTFAVIFIVAALSFFP.

It belongs to the KdpA family. The system is composed of three essential subunits: KdpA, KdpB and KdpC.

It localises to the cell inner membrane. In terms of biological role, part of the high-affinity ATP-driven potassium transport (or Kdp) system, which catalyzes the hydrolysis of ATP coupled with the electrogenic transport of potassium into the cytoplasm. This subunit binds the periplasmic potassium ions and delivers the ions to the membrane domain of KdpB through an intramembrane tunnel. This is Potassium-transporting ATPase potassium-binding subunit from Bacteroides fragilis (strain ATCC 25285 / DSM 2151 / CCUG 4856 / JCM 11019 / LMG 10263 / NCTC 9343 / Onslow / VPI 2553 / EN-2).